We begin with the raw amino-acid sequence, 343 residues long: Allergin-1 (343 aa).

The first 19 residues, 1 to 19 (MWSHLNRLLFWSIFSSVTC), serve as a signal peptide directing secretion. Residues 20–227 (RKAVLDCEAM…GGDSCPFCLK (208 aa)) lie on the Extracellular side of the membrane. Ig-like C2-type domains lie at 35 to 118 (PSPC…RDFS) and 128 to 213 (PVLN…HPVT). N-linked (GlcNAc...) asparagine glycans are attached at residues N51, N60, N89, N151, N157, and N182. Cystine bridges form between C56/C103 and C147/C196. A helical transmembrane segment spans residues 228–248 (LLLPGLLLLLVVIILILAFWV). Residues 249–343 (LPKYKTRKAM…SGYVYSELNF (95 aa)) lie on the Cytoplasmic side of the membrane. 2 short sequence motifs (ITIM motif) span residues 311 to 316 (LQYATP) and 336 to 341 (YVYSEL). Residues Y313 and Y338 each carry the phosphotyrosine modification.

Monomer. Interacts (tyrosine-phosphorylated) with PTPN6, PTPN11 and INPP5D. N-glycosylated. Expressed in myeloid cells (dendritic cells, macrophages and neutrophils, weak expression on B-cells but not in T-cells or natural killer cells), peripheral blood basophils and mast cells (at protein level).

The protein localises to the cell membrane. Functionally, immunoglobulin-like receptor which plays an inhibitory role in degranulation of mast cells. Negatively regulates IgE-mediated mast cell activation and suppresses the type I immediate hypersensitivity reaction. The polypeptide is Allergin-1 (MILR1) (Homo sapiens (Human)).